Consider the following 763-residue polypeptide: Phosphoglycerol transferase I (763 aa).

The next 4 helical transmembrane spans lie at 1-21, 26-46, 77-97, and 108-128; these read MSEL…AWKA, WWFA…ITLY, ILPG…LGWI, and VGYS…SPAF.

Belongs to the OpgB family.

The protein localises to the cell inner membrane. The catalysed reaction is a phosphatidylglycerol + a membrane-derived-oligosaccharide D-glucose = a 1,2-diacyl-sn-glycerol + a membrane-derived-oligosaccharide 6-(glycerophospho)-D-glucose.. It participates in glycan metabolism; osmoregulated periplasmic glucan (OPG) biosynthesis. Its function is as follows. Transfers a phosphoglycerol residue from phosphatidylglycerol to the membrane-bound nascent glucan backbones. The chain is Phosphoglycerol transferase I from Salmonella paratyphi B (strain ATCC BAA-1250 / SPB7).